The chain runs to 74 residues: uncharacterized protein (74 aa).

This is an uncharacterized protein from Salmonella typhimurium.